Reading from the N-terminus, the 142-residue chain is MFLIDVNVLLAAHRGDHPNHRTVRPWFDRLLAADDPFTVPNLVWASFLRLTTNRRIFEIPSPRADAFAFVEAVNAQPHHLPTSPGPRHLVLLRKLCDEADASGDLIPDAVLGAIAVEHHCAVVSLDRDFARFASVRHIRPPI.

Residues 3-139 (LIDVNVLLAA…ARFASVRHIR (137 aa)) enclose the PINc domain. Residues D5 and D108 each contribute to the Mg(2+) site.

This sequence belongs to the PINc/VapC protein family. Mg(2+) is required as a cofactor.

Functionally, toxic component of a type II toxin-antitoxin (TA) system. An RNase. Upon expression in M.smegmatis inhibits colony formation. Its toxic effect is neutralized by coexpression with cognate antitoxin VapB25. The polypeptide is Ribonuclease VapC25 (Mycobacterium tuberculosis (strain ATCC 25618 / H37Rv)).